Here is a 227-residue protein sequence, read N- to C-terminus: Deoxyribose-phosphate aldolase (227 aa).

Asp98 (proton donor/acceptor) is an active-site residue. Catalysis depends on Lys161, which acts as the Schiff-base intermediate with acetaldehyde. The active-site Proton donor/acceptor is Lys191.

It belongs to the DeoC/FbaB aldolase family. DeoC type 1 subfamily.

The protein localises to the cytoplasm. It carries out the reaction 2-deoxy-D-ribose 5-phosphate = D-glyceraldehyde 3-phosphate + acetaldehyde. Its pathway is carbohydrate degradation; 2-deoxy-D-ribose 1-phosphate degradation; D-glyceraldehyde 3-phosphate and acetaldehyde from 2-deoxy-alpha-D-ribose 1-phosphate: step 2/2. Catalyzes a reversible aldol reaction between acetaldehyde and D-glyceraldehyde 3-phosphate to generate 2-deoxy-D-ribose 5-phosphate. This chain is Deoxyribose-phosphate aldolase, found in Frankia alni (strain DSM 45986 / CECT 9034 / ACN14a).